The sequence spans 295 residues: Sulfotransferase 1A1 (295 aa).

3'-phosphoadenylyl sulfate is bound at residue 48 to 53 (KSGTTW). 106-108 (KTH) provides a ligand contact to substrate. His-108 (proton acceptor) is an active-site residue. 3'-phosphoadenylyl sulfate-binding positions include Arg-130, Ser-138, Tyr-193, 227-232 (TSFKEM), and 255-259 (FMRKG). Residue Ser-138 is modified to Phosphoserine.

Belongs to the sulfotransferase 1 family. In terms of assembly, homodimer. As to expression, distal lung parenchyma.

The protein localises to the cytoplasm. It carries out the reaction a phenol + 3'-phosphoadenylyl sulfate = an aryl sulfate + adenosine 3',5'-bisphosphate + H(+). The catalysed reaction is 17beta-estradiol + 3'-phosphoadenylyl sulfate = 17beta-estradiol 3-sulfate + adenosine 3',5'-bisphosphate + H(+). The enzyme catalyses 4-ethylphenol + 3'-phosphoadenylyl sulfate = 4-ethylphenyl sulfate + adenosine 3',5'-bisphosphate + H(+). It catalyses the reaction 4-nitrophenol + 3'-phosphoadenylyl sulfate = 4-nitrophenyl sulfate + adenosine 3',5'-bisphosphate. It carries out the reaction dopamine + 3'-phosphoadenylyl sulfate = dopamine 3-O-sulfate + adenosine 3',5'-bisphosphate + H(+). The catalysed reaction is dopamine + 3'-phosphoadenylyl sulfate = dopamine 4-O-sulfate + adenosine 3',5'-bisphosphate + H(+). The enzyme catalyses 3,3',5-triiodo-L-thyronine + 3'-phosphoadenylyl sulfate = 3,3',5-triiodo-L-thyronine sulfate + adenosine 3',5'-bisphosphate + H(+). It catalyses the reaction 3,3',5'-triiodo-L-thyronine + 3'-phosphoadenylyl sulfate = 3,3',5'-triiodo-L-thyronine sulfate + adenosine 3',5'-bisphosphate + H(+). It carries out the reaction 3,3'-diiodo-L-thyronine + 3'-phosphoadenylyl sulfate = 3,3'-diiodo-L-thyronine sulfate + adenosine 3',5'-bisphosphate + H(+). The catalysed reaction is L-thyroxine + 3'-phosphoadenylyl sulfate = L-thyroxine sulfate + adenosine 3',5'-bisphosphate + H(+). In terms of biological role, sulfotransferase that utilizes 3'-phospho-5'-adenylyl sulfate (PAPS) as sulfonate donor to catalyze the sulfate conjugation of a wide variety of acceptor molecules bearing a hydroxyl or an amine group. Sulfonation increases the water solubility of most compounds, and therefore their renal excretion, but it can also result in bioactivation to form active metabolites. Displays broad substrate specificity for small phenolic compounds. Plays an important role in the sulfonation of endogenous molecules such as steroid hormones. Mediates also the metabolic activation of carcinogenic N-hydroxyarylamines leading to highly reactive intermediates capable of forming DNA adducts, potentially resulting in mutagenesis. May play a role in gut microbiota-host metabolic interaction. O-sulfonates 4-ethylphenol (4-EP), a dietary tyrosine-derived metabolite produced by gut bacteria. The product 4-EPS crosses the blood-brain barrier and may negatively regulate oligodendrocyte maturation and myelination, affecting the functional connectivity of different brain regions associated with the limbic system. Catalyzes the sulfate conjugation of dopamine. Catalyzes the sulfation of T4 (L-thyroxine/3,5,3',5'-tetraiodothyronine), T3 (3,5,3'-triiodothyronine), rT3 (3,3',5'-triiodothyronine) and 3,3'-T2 (3,3'-diiodothyronine), with a substrate preference of 3,3'-T2 &gt; rT3 &gt; T3 &gt; T4. The chain is Sulfotransferase 1A1 (SULT1A1) from Bos taurus (Bovine).